The chain runs to 148 residues: Ergosterol biosynthetic protein 28 (148 aa).

Over 1 to 25 (MFSLQDVITTTKTTLAAMPKGYLPK) the chain is Cytoplasmic. Residues 26–46 (WLLFISIVSVFNSIQTYVSGL) traverse the membrane as a helical segment. Over 47-92 (ELTRKVYERKPTETTHLSARTFGTWTFISCVIRFYGAMYLNEPHIF) the chain is Lumenal. Residues 93-113 (ELVFMSYMVALFHFGSELLIF) traverse the membrane as a helical segment. The Cytoplasmic portion of the chain corresponds to 114–120 (RTCKLGK). Residues 121–136 (GFMGPLVVSTTSLVWM) traverse the membrane as a helical segment. Over 137 to 148 (YKQREYYTGVAW) the chain is Lumenal.

The protein belongs to the ERG28 family. Heterotetramer of ERG25, ERG26, ERG27 and ERG28. ERG28 acts as a scaffold to tether ERG27 and other 4,4-demethylation-related enzymes, forming a demethylation enzyme complex, in the endoplasmic reticulum. Interacts with ERG25, ERG26 and ERG27. Also interacts with ERG1, ERG3, ERG5, ERG6 and ERG11.

The protein resides in the endoplasmic reticulum membrane. Part of the third module of ergosterol biosynthesis pathway that includes the late steps of the pathway. ERG28 has a role as a scaffold to help anchor the catalytic components of the C-4 demethylation complex ERG25, ERG26 and ERG27 to the endoplasmic reticulum. The third module or late pathway involves the ergosterol synthesis itself through consecutive reactions that mainly occur in the endoplasmic reticulum (ER) membrane. Firstly, the squalene synthase ERG9 catalyzes the condensation of 2 farnesyl pyrophosphate moieties to form squalene, which is the precursor of all steroids. Squalene synthase is crucial for balancing the incorporation of farnesyl diphosphate (FPP) into sterol and nonsterol isoprene synthesis. Secondly, the squalene epoxidase ERG1 catalyzes the stereospecific oxidation of squalene to (S)-2,3-epoxysqualene, which is considered to be a rate-limiting enzyme in steroid biosynthesis. Then, the lanosterol synthase ERG7 catalyzes the cyclization of (S)-2,3 oxidosqualene to lanosterol, a reaction that forms the sterol core. In the next steps, lanosterol is transformed to zymosterol through a complex process involving various demethylation, reduction and desaturation reactions. The lanosterol 14-alpha-demethylase ERG11 (also known as CYP51) catalyzes C14-demethylation of lanosterol to produce 4,4'-dimethyl cholesta-8,14,24-triene-3-beta-ol, which is critical for ergosterol biosynthesis. The C-14 reductase ERG24 reduces the C14=C15 double bond of 4,4-dimethyl-cholesta-8,14,24-trienol to produce 4,4-dimethyl-cholesta-8,24-dienol. 4,4-dimethyl-cholesta-8,24-dienol is substrate of the C-4 demethylation complex ERG25-ERG26-ERG27 in which ERG25 catalyzes the three-step monooxygenation required for the demethylation of 4,4-dimethyl and 4alpha-methylsterols, ERG26 catalyzes the oxidative decarboxylation that results in a reduction of the 3-beta-hydroxy group at the C-3 carbon to an oxo group, and ERG27 is responsible for the reduction of the keto group on the C-3. ERG28 has a role as a scaffold to help anchor ERG25, ERG26 and ERG27 to the endoplasmic reticulum and ERG29 regulates the activity of the iron-containing C4-methylsterol oxidase ERG25. Then, the sterol 24-C-methyltransferase ERG6 catalyzes the methyl transfer from S-adenosyl-methionine to the C-24 of zymosterol to form fecosterol. The C-8 sterol isomerase ERG2 catalyzes the reaction which results in unsaturation at C-7 in the B ring of sterols and thus converts fecosterol to episterol. The sterol-C5-desaturase ERG3 then catalyzes the introduction of a C-5 double bond in the B ring to produce 5-dehydroepisterol. The C-22 sterol desaturase ERG5 further converts 5-dehydroepisterol into ergosta-5,7,22,24(28)-tetraen-3beta-ol by forming the C-22(23) double bond in the sterol side chain. Finally, ergosta-5,7,22,24(28)-tetraen-3beta-ol is substrate of the C-24(28) sterol reductase ERG4 to produce ergosterol. In Saccharomyces cerevisiae (strain ATCC 204508 / S288c) (Baker's yeast), this protein is Ergosterol biosynthetic protein 28.